A 1362-amino-acid chain; its full sequence is DNA-directed RNA polymerase subunit beta (1362 aa).

It belongs to the RNA polymerase beta chain family. In terms of assembly, the RNAP catalytic core consists of 2 alpha, 1 beta, 1 beta' and 1 omega subunit. When a sigma factor is associated with the core the holoenzyme is formed, which can initiate transcription.

It catalyses the reaction RNA(n) + a ribonucleoside 5'-triphosphate = RNA(n+1) + diphosphate. In terms of biological role, DNA-dependent RNA polymerase catalyzes the transcription of DNA into RNA using the four ribonucleoside triphosphates as substrates. This is DNA-directed RNA polymerase subunit beta from Acinetobacter baylyi (strain ATCC 33305 / BD413 / ADP1).